The sequence spans 213 residues: MKIVLATSNLDKVKEIKEFLKGYEIYALSEVVKPFEIVEDGSTFQANALIKSRAVFAKLKELGLEDEFVSLSDDSGISVDALGGEPGIYSARYFDLDENGKVCGKNANDANNRAKLISKLKALNLKSSPAHYTACIAISSKFGDYTAHGFMYGEAIDEERGTNGFGYDALFIPNGFNKTLGELDNETKLKISHRSKGLELANFVLKSLKKNFS.

7 to 12 is a substrate binding site; sequence TSNLDK. D74 (proton acceptor) is an active-site residue. Residue D74 participates in Mg(2+) binding. Substrate is bound by residues S75, 165-168, K188, and 193-194; these read FGYD and HR.

Belongs to the HAM1 NTPase family. Homodimer. It depends on Mg(2+) as a cofactor.

The catalysed reaction is XTP + H2O = XMP + diphosphate + H(+). It carries out the reaction dITP + H2O = dIMP + diphosphate + H(+). It catalyses the reaction ITP + H2O = IMP + diphosphate + H(+). Functionally, pyrophosphatase that catalyzes the hydrolysis of nucleoside triphosphates to their monophosphate derivatives, with a high preference for the non-canonical purine nucleotides XTP (xanthosine triphosphate), dITP (deoxyinosine triphosphate) and ITP. Seems to function as a house-cleaning enzyme that removes non-canonical purine nucleotides from the nucleotide pool, thus preventing their incorporation into DNA/RNA and avoiding chromosomal lesions. The protein is dITP/XTP pyrophosphatase of Campylobacter concisus (strain 13826).